Consider the following 484-residue polypeptide: tRNA sulfurtransferase (484 aa).

Residues Gln-63–Arg-167 enclose the THUMP domain. ATP contacts are provided by residues Leu-185–Ile-186, Lys-267, Gly-289, and Gln-298. Cysteines 346 and 458 form a disulfide. Residues Ile-406–Pro-484 enclose the Rhodanese domain. Cys-458 functions as the Cysteine persulfide intermediate in the catalytic mechanism.

It belongs to the ThiI family.

The protein localises to the cytoplasm. The enzyme catalyses [ThiI sulfur-carrier protein]-S-sulfanyl-L-cysteine + a uridine in tRNA + 2 reduced [2Fe-2S]-[ferredoxin] + ATP + H(+) = [ThiI sulfur-carrier protein]-L-cysteine + a 4-thiouridine in tRNA + 2 oxidized [2Fe-2S]-[ferredoxin] + AMP + diphosphate. It carries out the reaction [ThiS sulfur-carrier protein]-C-terminal Gly-Gly-AMP + S-sulfanyl-L-cysteinyl-[cysteine desulfurase] + AH2 = [ThiS sulfur-carrier protein]-C-terminal-Gly-aminoethanethioate + L-cysteinyl-[cysteine desulfurase] + A + AMP + 2 H(+). The protein operates within cofactor biosynthesis; thiamine diphosphate biosynthesis. Its function is as follows. Catalyzes the ATP-dependent transfer of a sulfur to tRNA to produce 4-thiouridine in position 8 of tRNAs, which functions as a near-UV photosensor. Also catalyzes the transfer of sulfur to the sulfur carrier protein ThiS, forming ThiS-thiocarboxylate. This is a step in the synthesis of thiazole, in the thiamine biosynthesis pathway. The sulfur is donated as persulfide by IscS. This Shewanella baltica (strain OS155 / ATCC BAA-1091) protein is tRNA sulfurtransferase.